Reading from the N-terminus, the 480-residue chain is Glutamyl-tRNA(Gln) amidotransferase subunit A (480 aa).

Active-site charge relay system residues include Lys76 and Ser151. Ser175 serves as the catalytic Acyl-ester intermediate.

Belongs to the amidase family. GatA subfamily. Heterotrimer of A, B and C subunits.

The enzyme catalyses L-glutamyl-tRNA(Gln) + L-glutamine + ATP + H2O = L-glutaminyl-tRNA(Gln) + L-glutamate + ADP + phosphate + H(+). Its function is as follows. Allows the formation of correctly charged Gln-tRNA(Gln) through the transamidation of misacylated Glu-tRNA(Gln) in organisms which lack glutaminyl-tRNA synthetase. The reaction takes place in the presence of glutamine and ATP through an activated gamma-phospho-Glu-tRNA(Gln). The chain is Glutamyl-tRNA(Gln) amidotransferase subunit A from Exiguobacterium sibiricum (strain DSM 17290 / CCUG 55495 / CIP 109462 / JCM 13490 / 255-15).